We begin with the raw amino-acid sequence, 106 residues long: MLWNLLALHQIGQRTISTASHRHFKNKVPEKQKLFQEDDGIPLYLKGGIADALLHRATMILTVGGTAYAIYQLAVASFPNKGVTSIIPAITWFTFIQLSMDQKSDK.

The transit peptide at 1–23 directs the protein to the mitochondrion; the sequence is MLWNLLALHQIGQRTISTASHRH.

It belongs to the cytochrome c oxidase VIIa family.

The protein localises to the mitochondrion inner membrane. The polypeptide is Putative cytochrome c oxidase subunit 7A3, mitochondrial (COX7A2P2) (Homo sapiens (Human)).